Consider the following 279-residue polypeptide: Oxygen-dependent coproporphyrinogen-III oxidase (279 aa).

S102 provides a ligand contact to substrate. Residues H106 and H116 each coordinate a divalent metal cation. Residue H116 is the Proton donor of the active site. A substrate-binding site is contributed by 118–120 (NTR). H149 and H179 together coordinate a divalent metal cation. The tract at residues 244–279 (YVEFNLLYDRGTKFGLMTDGNVEAILMSLPPEVKWA) is important for dimerization.

This sequence belongs to the aerobic coproporphyrinogen-III oxidase family. As to quaternary structure, homodimer. A divalent metal cation is required as a cofactor.

It is found in the cytoplasm. The catalysed reaction is coproporphyrinogen III + O2 + 2 H(+) = protoporphyrinogen IX + 2 CO2 + 2 H2O. It participates in porphyrin-containing compound metabolism; protoporphyrin-IX biosynthesis; protoporphyrinogen-IX from coproporphyrinogen-III (O2 route): step 1/1. In terms of biological role, involved in the heme biosynthesis. Catalyzes the aerobic oxidative decarboxylation of propionate groups of rings A and B of coproporphyrinogen-III to yield the vinyl groups in protoporphyrinogen-IX. This Rickettsia bellii (strain RML369-C) protein is Oxygen-dependent coproporphyrinogen-III oxidase.